The following is a 263-amino-acid chain: Acyl-[acyl-carrier-protein]--UDP-N-acetylglucosamine O-acyltransferase (263 aa).

It belongs to the transferase hexapeptide repeat family. LpxA subfamily. Homotrimer.

The protein resides in the cytoplasm. The enzyme catalyses a (3R)-hydroxyacyl-[ACP] + UDP-N-acetyl-alpha-D-glucosamine = a UDP-3-O-[(3R)-3-hydroxyacyl]-N-acetyl-alpha-D-glucosamine + holo-[ACP]. Its pathway is glycolipid biosynthesis; lipid IV(A) biosynthesis; lipid IV(A) from (3R)-3-hydroxytetradecanoyl-[acyl-carrier-protein] and UDP-N-acetyl-alpha-D-glucosamine: step 1/6. Its function is as follows. Involved in the biosynthesis of lipid A, a phosphorylated glycolipid that anchors the lipopolysaccharide to the outer membrane of the cell. The chain is Acyl-[acyl-carrier-protein]--UDP-N-acetylglucosamine O-acyltransferase from Xylella fastidiosa (strain Temecula1 / ATCC 700964).